Here is a 251-residue protein sequence, read N- to C-terminus: Adenosylcobinamide-GDP ribazoletransferase (251 aa).

7 consecutive transmembrane segments (helical) span residues 36 to 56 (LYPFIGLIIGALWYLSFFVLS), 60 to 80 (VPIMLMAALILTVPYILTGFL), 110 to 130 (VGAFSVISVVLLLLVEFAGMF), 141 to 161 (VLIFIPIASRAINGYFIVSQE), 181 to 201 (EIILLGIYVLVALITFFTLGI), 202 to 222 (NYLIAILAMGLISFILLLKVK), and 231 to 251 (DVAGYILVLMEFTGILLLGII).

The protein belongs to the CobS family. Mg(2+) is required as a cofactor.

The protein resides in the cell membrane. The enzyme catalyses alpha-ribazole + adenosylcob(III)inamide-GDP = adenosylcob(III)alamin + GMP + H(+). It catalyses the reaction alpha-ribazole 5'-phosphate + adenosylcob(III)inamide-GDP = adenosylcob(III)alamin 5'-phosphate + GMP + H(+). The protein operates within cofactor biosynthesis; adenosylcobalamin biosynthesis; adenosylcobalamin from cob(II)yrinate a,c-diamide: step 7/7. Functionally, joins adenosylcobinamide-GDP and alpha-ribazole to generate adenosylcobalamin (Ado-cobalamin). Also synthesizes adenosylcobalamin 5'-phosphate from adenosylcobinamide-GDP and alpha-ribazole 5'-phosphate. This is Adenosylcobinamide-GDP ribazoletransferase from Clostridium perfringens (strain 13 / Type A).